Consider the following 160-residue polypeptide: Globin-like protein (160 aa).

One can recognise a Globin domain in the interval 2-152 (SMTRQEIQDL…FNAECQVHLK (151 aa)). Histidine 101 serves as a coordination point for heme.

Belongs to the globin family.

The protein localises to the cytoplasm. In terms of biological role, may be a globin and may play a role in oxygen transport. In Caenorhabditis briggsae, this protein is Globin-like protein (glb-1).